A 229-amino-acid polypeptide reads, in one-letter code: ATP-dependent dethiobiotin synthetase BioD (229 aa).

12–17 lines the ATP pocket; sequence GAGKTI. Thr-16 is a binding site for Mg(2+). Residue Lys-38 is part of the active site. ATP contacts are provided by residues Asp-46, 105-108, and 165-166; these read EGVG and SE. Mg(2+) is bound by residues Asp-46 and Glu-105.

Belongs to the dethiobiotin synthetase family. In terms of assembly, homodimer. The cofactor is Mg(2+).

It localises to the cytoplasm. The enzyme catalyses (7R,8S)-7,8-diammoniononanoate + CO2 + ATP = (4R,5S)-dethiobiotin + ADP + phosphate + 3 H(+). The catalysed reaction is (7R,8S)-8-amino-7-(carboxyamino)nonanoate + ATP = (4R,5S)-dethiobiotin + ADP + phosphate + H(+). The protein operates within cofactor biosynthesis; biotin biosynthesis; biotin from 7,8-diaminononanoate: step 1/2. Its function is as follows. Catalyzes a mechanistically unusual reaction, the ATP-dependent insertion of CO2 between the N7 and N8 nitrogen atoms of 7,8-diaminopelargonic acid (DAPA, also called 7,8-diammoniononanoate) to form a ureido ring. This cyanobacterium does not encode bioA (which catalyzes the formation of the precursor for this reaction in the cannonical pathway), instead it encodes bioU, which replaces bioA and also performs the first half of the cannonical BioD reaction. Thus in this organism BioD has a different substrate. The polypeptide is ATP-dependent dethiobiotin synthetase BioD (Gloeobacter violaceus (strain ATCC 29082 / PCC 7421)).